A 299-amino-acid chain; its full sequence is AT-hook motif nuclear-localized protein 25 (299 aa).

Disordered stretches follow at residues 1–87 and 216–251; these read MSSY…RDSP and EEET…CESN. Basic and acidic residues-rich tracts occupy residues 14-23 and 33-42; these read HLQRPEDSRT and NRSEADEAKA. 2 stretches are compositionally biased toward low complexity: residues 44–72 and 224–239; these read TTPT…PAGS and TTGV…QSSE. The a.T hook DNA-binding region spans 63–75; it reads RRPRGRPAGSKNK. One can recognise a PPC domain in the interval 87-233; that stretch reads PNVLRSHVLE…TTGVQQQQPE (147 aa). Over residues 240-251 the composition is skewed to polar residues; it reads VTGSGAQACESN.

In terms of assembly, homodimer. Interacts with AHL27 and AHL29. In terms of tissue distribution, expressed in seedlings, leaves, stems, floral tips and flowers.

Its subcellular location is the nucleus. Its function is as follows. Transcription factor that specifically binds AT-rich DNA sequences related to the nuclear matrix attachment regions (MARs). Binds the DNA sequence GNFEI (GA-negative feedback element I) in the GA3OX1 promoter. Binding to GNFEI sequence is required for GA-negative feedback regulation of GA3OX1. The polypeptide is AT-hook motif nuclear-localized protein 25 (Arabidopsis thaliana (Mouse-ear cress)).